A 222-amino-acid chain; its full sequence is Embryonic stem cell-related gene protein (222 aa).

As to expression, expressed only in fetal ovary and in undifferentiated ES cells.

The protein resides in the nucleus. The chain is Embryonic stem cell-related gene protein (ESRG) from Homo sapiens (Human).